The chain runs to 237 residues: Ribonuclease PH (237 aa).

Phosphate-binding positions include Arg-86 and 124-126 (GTR).

Belongs to the RNase PH family. As to quaternary structure, homohexameric ring arranged as a trimer of dimers.

The enzyme catalyses tRNA(n+1) + phosphate = tRNA(n) + a ribonucleoside 5'-diphosphate. Phosphorolytic 3'-5' exoribonuclease that plays an important role in tRNA 3'-end maturation. Removes nucleotide residues following the 3'-CCA terminus of tRNAs; can also add nucleotides to the ends of RNA molecules by using nucleoside diphosphates as substrates, but this may not be physiologically important. Probably plays a role in initiation of 16S rRNA degradation (leading to ribosome degradation) during starvation. The sequence is that of Ribonuclease PH from Methylorubrum populi (strain ATCC BAA-705 / NCIMB 13946 / BJ001) (Methylobacterium populi).